The following is a 192-amino-acid chain: Holliday junction branch migration complex subunit RuvA (192 aa).

Positions methionine 1–leucine 64 are domain I. Positions threonine 65 to alanine 139 are domain II. Positions alanine 139–lysine 143 are flexible linker. The tract at residues proline 144–arginine 192 is domain III.

This sequence belongs to the RuvA family. Homotetramer. Forms an RuvA(8)-RuvB(12)-Holliday junction (HJ) complex. HJ DNA is sandwiched between 2 RuvA tetramers; dsDNA enters through RuvA and exits via RuvB. An RuvB hexamer assembles on each DNA strand where it exits the tetramer. Each RuvB hexamer is contacted by two RuvA subunits (via domain III) on 2 adjacent RuvB subunits; this complex drives branch migration. In the full resolvosome a probable DNA-RuvA(4)-RuvB(12)-RuvC(2) complex forms which resolves the HJ.

Its subcellular location is the cytoplasm. Functionally, the RuvA-RuvB-RuvC complex processes Holliday junction (HJ) DNA during genetic recombination and DNA repair, while the RuvA-RuvB complex plays an important role in the rescue of blocked DNA replication forks via replication fork reversal (RFR). RuvA specifically binds to HJ cruciform DNA, conferring on it an open structure. The RuvB hexamer acts as an ATP-dependent pump, pulling dsDNA into and through the RuvAB complex. HJ branch migration allows RuvC to scan DNA until it finds its consensus sequence, where it cleaves and resolves the cruciform DNA. The polypeptide is Holliday junction branch migration complex subunit RuvA (Methylibium petroleiphilum (strain ATCC BAA-1232 / LMG 22953 / PM1)).